The following is a 176-amino-acid chain: Peptide methionine sulfoxide reductase B3 (176 aa).

A signal peptide spans 1-26; the sequence is MNIVNSKILFLSFTLLLLLQSSIVES. The region spanning 51–172 is the MsrB domain; the sequence is DEEWRAILSP…NSVSLKFTPA (122 aa). Zn(2+) contacts are provided by Cys-90, Cys-93, Cys-136, and Cys-139. A disulfide bond links Cys-108 and Cys-161. The active-site Nucleophile is Cys-161.

This sequence belongs to the MsrB Met sulfoxide reductase family. Zn(2+) is required as a cofactor.

It is found in the endoplasmic reticulum. It catalyses the reaction L-methionyl-[protein] + [thioredoxin]-disulfide + H2O = L-methionyl-(R)-S-oxide-[protein] + [thioredoxin]-dithiol. Functionally, catalyzes the reduction of methionine sulfoxide (MetSO) to methionine in proteins. Plays a protective role against oxidative stress by restoring activity to proteins that have been inactivated by methionine oxidation. Involved in cold tolerance. Eliminates MetSO and reactive oxygen species that accumulate at the ER during cold acclimation. MSRB family specifically reduces the MetSO R-enantiomer. The chain is Peptide methionine sulfoxide reductase B3 (MSRB3) from Arabidopsis thaliana (Mouse-ear cress).